Reading from the N-terminus, the 314-residue chain is Olfactory receptor 52B4 (314 aa).

Over 1–27 (MPTVNHSGTSHTVFHLLGIPGLQDQHM) the chain is Extracellular. Asn-5 is a glycosylation site (N-linked (GlcNAc...) asparagine). A helical transmembrane segment spans residues 28–48 (WISIPFFISYVTALLGNSLLI). The Cytoplasmic portion of the chain corresponds to 49-56 (FIILTKRS). A helical membrane pass occupies residues 57–77 (LHEPMYLFLCMLAGADIVLST). Residues 78–101 (CTIPQALAIFWFRAGDISLDRCIT) are Extracellular-facing. Cys-99 and Cys-191 form a disulfide bridge. The helical transmembrane segment at 102–122 (QLFFIHSTFISESGILLVMAF) threads the bilayer. At 123–141 (DHYIAICYPLRYTTILTNA) the chain is on the cytoplasmic side. Residues 142–162 (LIKKICVTVSLRSYGTIFPII) form a helical membrane-spanning segment. Over 163–198 (FLLKRLTFCQNNIIPHTFCEHIGLAKYACNDIRINI) the chain is Extracellular. The helical transmembrane segment at 199-219 (WYGFSILMSTVVLDVVLIFIS) threads the bilayer. Residues 220–239 (YMLILHAVFHMPSPDACHKA) are Cytoplasmic-facing. Residues 240–260 (LNTFGSHVCIIILFYGSGIFT) form a helical membrane-spanning segment. Residues 261–275 (ILTQRFGRHIPPCIH) lie on the Extracellular side of the membrane. The chain crosses the membrane as a helical span at residues 276–296 (IPLANVCILAPPMLNPIIYGI). Over 297–314 (KTKQIQEQVVQFLFIKQK) the chain is Cytoplasmic.

Belongs to the G-protein coupled receptor 1 family.

It is found in the cell membrane. In terms of biological role, odorant receptor. The protein is Olfactory receptor 52B4 (OR52B4) of Homo sapiens (Human).